Reading from the N-terminus, the 40-residue chain is Ferredoxin-2 (40 aa).

The region spanning 3–40 (YNIKLITPEGTKEITCSDSEYILDAAEEKGLDLPYSCR) is the 2Fe-2S ferredoxin-type domain. C39 is a [2Fe-2S] cluster binding site.

It belongs to the 2Fe2S plant-type ferredoxin family. [2Fe-2S] cluster serves as cofactor.

Its subcellular location is the plastid. The protein localises to the chloroplast. Functionally, ferredoxins are iron-sulfur proteins that transfer electrons in a wide variety of metabolic reactions. The sequence is that of Ferredoxin-2 from Pisum sativum (Garden pea).